We begin with the raw amino-acid sequence, 377 residues long: MQRLALAGTRAIVDMSYARHFLDFQGSAIPSKMQKLVVTRLSPNFREAVTLRRDCPVPLPGDGDLLVRNRFVGVNASDINYSAGRYDPSVKTPFDAGFEGVGEVVALGLSASAAFMVGQAVAYMAPGSFAEYTVVPARVAIPVPGLKPEYLTLLVSGTTAYISLKELGGLSEGKKVLVTAAAGGTGQFAVQLAKKAKCHVIGTCSSAEKSAFLKSVGCDRPINYNTEHVGTVLRQEYPQGVDVVYESVGGAMFDLAVDALATRGRLIVIGFVSGYQTPTGLSPVKAGTLPAKLLKKSASVQGFFLNHYLPEFRGAMDHLLKMYAGGELVCEVDTGGLSAEGRFTGLESVFRAVDYMYMRKNTGKIVVELPPSVNSKL.

An N6-acetyllysine modification is found at Lys-35. NADP(+) is bound by residues Thr-185, Ser-205, Lys-209, Tyr-224, Ser-247, Ile-269, and Tyr-275. At Ser-299 the chain carries Phosphoserine. Residues 303–305 (FFL) and Asn-361 contribute to the NADP(+) site.

This sequence belongs to the zinc-containing alcohol dehydrogenase family. Quinone oxidoreductase subfamily.

The protein resides in the peroxisome. The catalysed reaction is 13,14-dihydro-15-oxo-prostaglandin E2 + NADP(+) = 15-oxoprostaglandin E2 + NADPH + H(+). It carries out the reaction 13,14-dihydro-15-oxo-prostaglandin E1 + NADP(+) = 15-oxoprostaglandin E1 + NADPH + H(+). It catalyses the reaction 13,14-dihydro-15-oxo-PGF2alpha + NADP(+) = 15-oxoprostaglandin F2alpha + NADPH + H(+). The enzyme catalyses 13,14-dihydro-15-oxo-prostaglandin F1alpha + NADP(+) = 15-oxoprostaglandin F1alpha + NADPH + H(+). Functionally, functions as 15-oxo-prostaglandin 13-reductase and acts on 15-keto-PGE1, 15-keto-PGE2, 15-keto-PGE1-alpha and 15-keto-PGE2-alpha with highest efficiency towards 15-keto-PGE2-alpha. Overexpression represses transcriptional activity of PPARG and inhibits adipocyte differentiation. This is Prostaglandin reductase-3 (PTGR3) from Bos taurus (Bovine).